A 32-amino-acid chain; its full sequence is ilv operon leader peptide (32 aa).

The polypeptide is ilv operon leader peptide (ilvL) (Yersinia pestis).